The primary structure comprises 311 residues: Arginine/serine-rich protein 1 (311 aa).

Positions 1-125 (MSTYVNDMWP…RSRSRSRGRS (125 aa)) are disordered. S12 carries the phosphoserine modification. Residues 20–31 (STSRSGGSSRLS) are compositionally biased toward low complexity. The span at 32 to 123 (SRSRSRSFSR…RSRSRSRSRG (92 aa)) shows a compositional bias: basic residues. Phosphoserine is present on residues S109 and S111. Omega-N-methylarginine is present on R135.

It belongs to the RSRP family. Phosphorylated. Phosphorylation at Ser-109 and Ser-111 mediates the interaction with spliceosome proteins.

It localises to the nucleus. In terms of biological role, probably acts as a spliceosomal factor that contributes to spliceosome assembly and regulates the isoform switching of proteins such as PARP6. The sequence is that of Arginine/serine-rich protein 1 (RSRP1) from Pongo abelii (Sumatran orangutan).